A 333-amino-acid polypeptide reads, in one-letter code: Protoheme IX farnesyltransferase (333 aa).

The next 7 helical transmembrane spans lie at 64-84, 110-130, 133-153, 161-181, 189-209, 246-266, and 287-307; these read LICT…LNCL, TVFL…VSGV, LAAG…TVIL, IVFG…AATG, WLFG…AILL, IMGV…LLPF, and AKSL…LLLI.

It belongs to the UbiA prenyltransferase family. Protoheme IX farnesyltransferase subfamily.

Its subcellular location is the cell inner membrane. The catalysed reaction is heme b + (2E,6E)-farnesyl diphosphate + H2O = Fe(II)-heme o + diphosphate. Its pathway is porphyrin-containing compound metabolism; heme O biosynthesis; heme O from protoheme: step 1/1. In terms of biological role, converts heme B (protoheme IX) to heme O by substitution of the vinyl group on carbon 2 of heme B porphyrin ring with a hydroxyethyl farnesyl side group. The polypeptide is Protoheme IX farnesyltransferase (Prochlorococcus marinus (strain MIT 9215)).